The sequence spans 361 residues: Peptide chain release factor 1 (361 aa).

At Gln237 the chain carries N5-methylglutamine. Over residues 287-297 (KQQKEQSDTRK) the composition is skewed to basic and acidic residues. Residues 287 to 313 (KQQKEQSDTRKSLVGSGDRSERIRTYN) form a disordered region.

The protein belongs to the prokaryotic/mitochondrial release factor family. Post-translationally, methylated by PrmC. Methylation increases the termination efficiency of RF1.

The protein resides in the cytoplasm. Functionally, peptide chain release factor 1 directs the termination of translation in response to the peptide chain termination codons UAG and UAA. The protein is Peptide chain release factor 1 of Francisella tularensis subsp. holarctica (strain FTNF002-00 / FTA).